Consider the following 84-residue polypeptide: U-scoloptoxin(10)-Er1a (84 aa).

The signal sequence occupies residues 1–24 (MSRFCLLFVAFGFVLYFLHMEVTG).

Belongs to the scoloptoxin-10 family. In terms of processing, contains 3 disulfide bonds. In terms of tissue distribution, expressed by the venom gland.

Its subcellular location is the secreted. This Ethmostigmus rubripes (Giant centipede) protein is U-scoloptoxin(10)-Er1a.